Consider the following 462-residue polypeptide: Glycoprotein endo-alpha-1,2-mannosidase (462 aa).

At 1 to 8 (MAKFRRGT) the chain is on the cytoplasmic side. Residues 9-29 (CIILALFILFIFSLMMGLKML) form a helical; Signal-anchor for type II membrane protein membrane-spanning segment. The Lumenal portion of the chain corresponds to 30-462 (RPNTATFGAP…YALDHQLPVS (433 aa)). The segment at 60–462 (DFQKSDRINS…YALDHQLPVS (403 aa)) is catalytic.

This sequence belongs to the glycosyl hydrolase 99 family. Undergoes proteolytic cleavage in the C-terminal region.

It localises to the golgi apparatus membrane. The catalysed reaction is N-{alpha-Glc-(1-&gt;3)-alpha-Man-(1-&gt;2)-alpha-Man-(1-&gt;2)-alpha-Man-(1-&gt;3)-[alpha-Man-(1-&gt;2)-alpha-Man-(1-&gt;3)-[alpha-Man-(1-&gt;2)-alpha-Man-(1-&gt;6)]-alpha-Man-(1-&gt;6)]-beta-Man-(1-&gt;4)-beta-GlcNAc-(1-&gt;4)-beta-GlcNAc}-L-asparaginyl-[protein] + H2O = alpha-D-glucosyl-(1-&gt;3)-D-mannopyranose + N(4)-{alpha-D-Man-(1-&gt;2)-alpha-D-Man-(1-&gt;3)-[alpha-D-Man-(1-&gt;2)-alpha-D-Man-(1-&gt;3)-[alpha-D-Man-(1-&gt;2)-alpha-D-Man-(1-&gt;6)]-alpha-D-Man-(1-&gt;6)]-beta-D-Man-(1-&gt;4)-beta-D-GlaNAc-(1-&gt;4)-beta-D-GlcNAc}-L-asparaginyl-[protein] (N-glucan mannose isomer 8A1,2,3B1,2). This Pongo abelii (Sumatran orangutan) protein is Glycoprotein endo-alpha-1,2-mannosidase (MANEA).